A 145-amino-acid polypeptide reads, in one-letter code: Cell wall teichoic acid glycosylation protein GtcA (145 aa).

Helical transmembrane passes span 21–41 (ILMYLIMGGFTTLINIVTFWL), 52–69 (IANTIAWVASVLFAYFSN), 96–116 (FLTYIVDFLVMILLISGLGIN), and 121–141 (KIWTNVIVLILNYVFSKWIIF).

Belongs to the GtrA family.

It localises to the cell membrane. Its function is as follows. Involved in the decoration of cell wall teichoic acid with galactose and glucose. The chain is Cell wall teichoic acid glycosylation protein GtcA (gtcA) from Listeria innocua serovar 6a (strain ATCC BAA-680 / CLIP 11262).